Here is a 308-residue protein sequence, read N- to C-terminus: Prephenate dehydratase (308 aa).

The Prephenate dehydratase domain occupies 3-187 (RITYLGPEGT…AHTRFVLVGR (185 aa)). Residues 201-278 (SVVLGLGNVP…EDVRYLGSWP (78 aa)) form the ACT domain.

Homodimer.

It carries out the reaction prephenate + H(+) = 3-phenylpyruvate + CO2 + H2O. Its pathway is amino-acid biosynthesis; L-phenylalanine biosynthesis; phenylpyruvate from prephenate: step 1/1. This Mycobacteroides abscessus (strain ATCC 19977 / DSM 44196 / CCUG 20993 / CIP 104536 / JCM 13569 / NCTC 13031 / TMC 1543 / L948) (Mycobacterium abscessus) protein is Prephenate dehydratase (pheA).